The following is a 457-amino-acid chain: MATGKIVQIIGAVIDVEFPQDAVPKVYDALKVESGLTLEVQQQLGGGLVRCIALGTSDGLKRGLKVENTGNPIQVPVGTKTLGRIMNVLGEPIDEKGPIGEEARWDIHRAAPSYEEQSNSTELLETGIKVIDLICPFAKGGKVGLFGGAGVGKTVNMMELIRNIAIEHSGYSVFAGVGERTREGNDFYHEMTDSNVLDKVSLVYGQMNEPPGNRLRVALTGLTMAEKFRDEGRDVLFFVDNIYRYTLAGTEVSALLGRMPSAVGYQPTLAEEMGVLQERITSTKTGSITSVQAVYVPADDLTDPSPATTFAHLDSTVVLSRNIASLGIYPAVDPLDSTSRQLDPLVVGEEHYNVARGVQGTLQRYKELKDIIAILGMDELSEDDKLVVARARKIERFLSQPFFVAEVFTGSPGKYVSLKDTIRGFKGILEGEFDHIPEQAFYMAGSIDEVVERASKM.

147–154 is a binding site for ATP; the sequence is GGAGVGKT.

The protein belongs to the ATPase alpha/beta chains family. F-type ATPases have 2 components, CF(1) - the catalytic core - and CF(0) - the membrane proton channel. CF(1) has five subunits: alpha(3), beta(3), gamma(1), delta(1), epsilon(1). CF(0) has three main subunits: a(1), b(2) and c(9-12). The alpha and beta chains form an alternating ring which encloses part of the gamma chain. CF(1) is attached to CF(0) by a central stalk formed by the gamma and epsilon chains, while a peripheral stalk is formed by the delta and b chains.

It is found in the cell inner membrane. The catalysed reaction is ATP + H2O + 4 H(+)(in) = ADP + phosphate + 5 H(+)(out). Produces ATP from ADP in the presence of a proton gradient across the membrane. The catalytic sites are hosted primarily by the beta subunits. This Actinobacillus pleuropneumoniae serotype 5b (strain L20) protein is ATP synthase subunit beta.